The following is a 252-amino-acid chain: Imidazole glycerol phosphate synthase subunit HisF (252 aa).

Catalysis depends on residues Asp11 and Asp130.

Belongs to the HisA/HisF family. In terms of assembly, heterodimer of HisH and HisF.

It is found in the cytoplasm. It catalyses the reaction 5-[(5-phospho-1-deoxy-D-ribulos-1-ylimino)methylamino]-1-(5-phospho-beta-D-ribosyl)imidazole-4-carboxamide + L-glutamine = D-erythro-1-(imidazol-4-yl)glycerol 3-phosphate + 5-amino-1-(5-phospho-beta-D-ribosyl)imidazole-4-carboxamide + L-glutamate + H(+). Its pathway is amino-acid biosynthesis; L-histidine biosynthesis; L-histidine from 5-phospho-alpha-D-ribose 1-diphosphate: step 5/9. Its function is as follows. IGPS catalyzes the conversion of PRFAR and glutamine to IGP, AICAR and glutamate. The HisF subunit catalyzes the cyclization activity that produces IGP and AICAR from PRFAR using the ammonia provided by the HisH subunit. This chain is Imidazole glycerol phosphate synthase subunit HisF, found in Bacillus anthracis (strain CDC 684 / NRRL 3495).